The following is a 576-amino-acid chain: Potassium-transporting ATPase potassium-binding subunit (576 aa).

Helical transmembrane passes span I3–I23, L68–F88, G137–I157, I179–V199, F267–I287, W294–F314, F339–V359, L369–G389, G391–G411, V430–T450, I495–M515, and L537–P557.

This sequence belongs to the KdpA family. In terms of assembly, the system is composed of three essential subunits: KdpA, KdpB and KdpC.

It is found in the cell inner membrane. Functionally, part of the high-affinity ATP-driven potassium transport (or Kdp) system, which catalyzes the hydrolysis of ATP coupled with the electrogenic transport of potassium into the cytoplasm. This subunit binds the periplasmic potassium ions and delivers the ions to the membrane domain of KdpB through an intramembrane tunnel. This is Potassium-transporting ATPase potassium-binding subunit from Hydrogenobaculum sp. (strain Y04AAS1).